Consider the following 511-residue polypeptide: Bifunctional purine biosynthesis protein PurH (511 aa).

Residues 1-146 (MARLALLSVS…KNFAHTTVLT (146 aa)) form the MGS-like domain.

Belongs to the PurH family.

The catalysed reaction is (6R)-10-formyltetrahydrofolate + 5-amino-1-(5-phospho-beta-D-ribosyl)imidazole-4-carboxamide = 5-formamido-1-(5-phospho-D-ribosyl)imidazole-4-carboxamide + (6S)-5,6,7,8-tetrahydrofolate. The enzyme catalyses IMP + H2O = 5-formamido-1-(5-phospho-D-ribosyl)imidazole-4-carboxamide. It participates in purine metabolism; IMP biosynthesis via de novo pathway; 5-formamido-1-(5-phospho-D-ribosyl)imidazole-4-carboxamide from 5-amino-1-(5-phospho-D-ribosyl)imidazole-4-carboxamide (10-formyl THF route): step 1/1. It functions in the pathway purine metabolism; IMP biosynthesis via de novo pathway; IMP from 5-formamido-1-(5-phospho-D-ribosyl)imidazole-4-carboxamide: step 1/1. The sequence is that of Bifunctional purine biosynthesis protein PurH from Synechocystis sp. (strain ATCC 27184 / PCC 6803 / Kazusa).